A 70-amino-acid chain; its full sequence is SPbeta prophage-derived uncharacterized protein YotJ (70 aa).

The protein is SPbeta prophage-derived uncharacterized protein YotJ (yotJ) of Bacillus subtilis (strain 168).